Reading from the N-terminus, the 122-residue chain is Small ribosomal subunit protein uS13 (122 aa).

Residues 93-122 (RRGLPVRGQNTKTNARTRKGPKRTAGGKKK) form a disordered region. Residues 107 to 122 (ARTRKGPKRTAGGKKK) show a composition bias toward basic residues.

It belongs to the universal ribosomal protein uS13 family. As to quaternary structure, part of the 30S ribosomal subunit. Forms a loose heterodimer with protein S19. Forms two bridges to the 50S subunit in the 70S ribosome.

In terms of biological role, located at the top of the head of the 30S subunit, it contacts several helices of the 16S rRNA. In the 70S ribosome it contacts the 23S rRNA (bridge B1a) and protein L5 of the 50S subunit (bridge B1b), connecting the 2 subunits; these bridges are implicated in subunit movement. Contacts the tRNAs in the A and P-sites. This is Small ribosomal subunit protein uS13 from Syntrophomonas wolfei subsp. wolfei (strain DSM 2245B / Goettingen).